The primary structure comprises 465 residues: Methylenetetrahydrofolate--tRNA-(uracil-5-)-methyltransferase TrmFO (465 aa).

An FAD-binding site is contributed by 3–8; sequence GAGLAG.

The protein belongs to the MnmG family. TrmFO subfamily. The cofactor is FAD.

Its subcellular location is the cytoplasm. It catalyses the reaction uridine(54) in tRNA + (6R)-5,10-methylene-5,6,7,8-tetrahydrofolate + NADH + H(+) = 5-methyluridine(54) in tRNA + (6S)-5,6,7,8-tetrahydrofolate + NAD(+). It carries out the reaction uridine(54) in tRNA + (6R)-5,10-methylene-5,6,7,8-tetrahydrofolate + NADPH + H(+) = 5-methyluridine(54) in tRNA + (6S)-5,6,7,8-tetrahydrofolate + NADP(+). Its function is as follows. Catalyzes the folate-dependent formation of 5-methyl-uridine at position 54 (M-5-U54) in all tRNAs. The sequence is that of Methylenetetrahydrofolate--tRNA-(uracil-5-)-methyltransferase TrmFO from Bradyrhizobium sp. (strain ORS 278).